The sequence spans 996 residues: MLGISNLCRYYQGQRRVCANKFYQKYVNHSDLYFFDLWEISANNLWIKLAFVLLLCLFEIISGLEYLGKMAQEILKQGIPANVLQEKANLFKKASANNKIKDEMPNALSLYQNHSFFQKLKHLADKKNLDITSLPGGREVEYKHLDAGHLLADTNVVIDVPLVPQLAARTPTDYNFGTSRDKSATALHVGAIEVVIQSYASSECDLMAGMMLVDTFHSRPENAIRSVYIVPIRGGMFMRALCFPNTLVPMDSDINNRFKVVFSLPNNDFPQGSKLGHVSINMAGCTTSLSKTYVPSPLLTEELGREAATVIQYLGRDTYAMQTSNVPTSDEISRMVFNFHMEGKLSMHKTGSLSSILSKSKSLRYTIGGSKPKNKLADKAHNEEAETSDSKGIIDPKDGNVFANPQTDTDLFKLSLDDTSSPKGSLLDTRFAQKKVLIPKAMAGGADLLSSNLYDVLSGSSFRASLALARTHVVEGKIRCICTINLPENTGCCLAITVNSSNRGQFSTDIYTTGSQDRILWNPACSKNCDFSFNPNPCGTAWSLEFLRRTKFHLSVTCVSGWSAQPQTDIAMTMDWYVSNKPCVPCIYNVGTPGQNVWVNRWMGKLSFPQGSQNQLKQMPLAIGGGAGAKNSILMNMTNAFLSLWRYFHGDLVFEVQKMSSPFIKSTVTFFIGFGGLPFSENLEDFPNKLIQFGEVQERVEITFTRKEFLTAWSTQVDPAGPVAGDGCPYLCAMVHDSTASTITGDFNLGVTLLRIENFVGIGRNPGIQGARLLGSMQAEAQGGVVRTTDGVYSTCFRVRTPLALKDSGSFTCDLIGGGITTDSNTGWNLTALNTPVANLLRTAAWKRGTIHVQVAMFGSTVKRSDWTSTVQLFLRQSMNTSSYDARVWVISKPGAAILEFSFDVEGPNNGFEMWEANWASQTSWFLEFLISNVTQNTLFEVSMKLDSNFCVAGTTLMPPFSVTASPDSRPLLGVKTSTPAKKYVGGSLQAGPSPD.

An involved in tubule formation by the movement protein region spans residues 363–369 (LRYTIGG). Residues 368–398 (GGSKPKNKLADKAHNEEAETSDSKGIIDPKD) form a disordered region. Positions 375 to 398 (KLADKAHNEEAETSDSKGIIDPKD) are enriched in basic and acidic residues.

Interacts with the large capsid protein. In terms of assembly, interacts with the small capsid protein. Homomultimer; assembles as pentons. Interacts with the movement protein (via C-terminus). As to quaternary structure, interacts (via C-terminus) with the large capsid protein. Specific enzymatic cleavages by picornain 3C-like protease in vivo yield mature proteins.

The protein resides in the host cell junction. It localises to the host plasmodesma. It is found in the virion. In terms of biological role, responsible for viral RNA2 accumulation. May function by recruiting the RNA1-encoded polyprotein that contains the replication protein to RNA2 and enable its replication. Functionally, transports the viral genome to neighboring plant cells directly through plasmosdesmata, without any budding. The movement protein allows efficient cell to cell propagation, by bypassing the host cell wall barrier. Acts by forming a tubular structure at the host plasmodesmata, enlarging it enough to allow free passage of virion capsids. Binds to GTP and to single-stranded RNA and single-stranded DNA in a non-sequence-specific manner. Together with the mature small capsid protein, forms an icosahedral capsid (T=3) enclosing the viral positive strand RNA genome, with a diameter of approximately 300 Angstroms. The capsid is formed from 60 copies each of the large and the mature small capsid protein. The large capsid protein interacts with the viral RNA. Its function is as follows. Together with the large capsid protein, forms an icosahedral capsid (T=3) enclosing the viral positive strand RNA genome, with a diameter of approximately 300 Angstroms. The capsid is formed from 60 copies each of the large and the mature small capsid protein. The mature small capsid protein forms the turrets at the fivefold axes of the viral particle. This is RNA2 polyprotein from Red clover mottle virus (RCMV).